A 101-amino-acid chain; its full sequence is Protein SPIRAL1-like 3 (101 aa).

The segment covering 1–22 (MGRGVSSGGGQSSLGYLFGGGE) has biased composition (gly residues). Disordered stretches follow at residues 1-54 (MGRG…GIQS) and 73-101 (TDRP…KDGK).

Belongs to the SPIRAL1 family.

In terms of biological role, acts in maintaining the cortical microtubules organization essential for anisotropic cell growth. The chain is Protein SPIRAL1-like 3 from Oryza sativa subsp. japonica (Rice).